Reading from the N-terminus, the 357-residue chain is Uroporphyrinogen decarboxylase (357 aa).

Residues 27-31, aspartate 77, tyrosine 154, serine 209, and histidine 330 each bind substrate; that span reads RQAGR.

Belongs to the uroporphyrinogen decarboxylase family. Homodimer.

The protein resides in the cytoplasm. It catalyses the reaction uroporphyrinogen III + 4 H(+) = coproporphyrinogen III + 4 CO2. It participates in porphyrin-containing compound metabolism; protoporphyrin-IX biosynthesis; coproporphyrinogen-III from 5-aminolevulinate: step 4/4. Catalyzes the decarboxylation of four acetate groups of uroporphyrinogen-III to yield coproporphyrinogen-III. This is Uroporphyrinogen decarboxylase from Acinetobacter baumannii (strain AB0057).